The following is a 111-amino-acid chain: Probable 4-amino-4-deoxy-L-arabinose-phosphoundecaprenol flippase subunit ArnE (111 aa).

A run of 3 helical transmembrane segments spans residues 38 to 58, 61 to 81, and 91 to 111; these read LWLG…LLVL, LPVG…TLAA, and PRHW…GSAA. The region spanning 40 to 109 is the EamA domain; sequence LGLALICMGA…IISGIIILGS (70 aa).

It belongs to the ArnE family. Heterodimer of ArnE and ArnF.

The protein resides in the cell inner membrane. The protein operates within bacterial outer membrane biogenesis; lipopolysaccharide biosynthesis. Functionally, translocates 4-amino-4-deoxy-L-arabinose-phosphoundecaprenol (alpha-L-Ara4N-phosphoundecaprenol) from the cytoplasmic to the periplasmic side of the inner membrane. This chain is Probable 4-amino-4-deoxy-L-arabinose-phosphoundecaprenol flippase subunit ArnE, found in Salmonella enteritidis PT4 (strain P125109).